Consider the following 400-residue polypeptide: Apolipoprotein N-acyltransferase (400 aa).

The next 5 helical transmembrane spans lie at 16-36 (AISP…VLFV), 42-62 (FGVG…GLRY), 67-87 (FLIP…FYIG), 97-117 (FAFL…IVPE), and 123-143 (SYIG…WILF). The 220-residue stretch at 181–400 (AQSAVSQDFD…AIITPFVSSR (220 aa)) folds into the CN hydrolase domain. The active-site Proton acceptor is the glutamate 222. Lysine 283 is an active-site residue. Cysteine 332 (nucleophile) is an active-site residue. A helical membrane pass occupies residues 377 to 397 (YGSVIFHATNLSPAAIITPFV).

The protein belongs to the CN hydrolase family. Apolipoprotein N-acyltransferase subfamily.

The protein resides in the cell inner membrane. It catalyses the reaction N-terminal S-1,2-diacyl-sn-glyceryl-L-cysteinyl-[lipoprotein] + a glycerophospholipid = N-acyl-S-1,2-diacyl-sn-glyceryl-L-cysteinyl-[lipoprotein] + a 2-acyl-sn-glycero-3-phospholipid + H(+). Its pathway is protein modification; lipoprotein biosynthesis (N-acyl transfer). In terms of biological role, catalyzes the phospholipid dependent N-acylation of the N-terminal cysteine of apolipoprotein, the last step in lipoprotein maturation. The protein is Apolipoprotein N-acyltransferase of Helicobacter hepaticus (strain ATCC 51449 / 3B1).